The following is a 229-amino-acid chain: 23 kDa piroplasm membrane protein (229 aa).

The signal sequence occupies residues methionine 1 to serine 19. Topologically, residues alanine 20 to tyrosine 203 are extracellular. Residues valine 204–valine 224 traverse the membrane as a helical segment. The Cytoplasmic segment spans residues lysine 225–lysine 229.

It is found in the membrane. The polypeptide is 23 kDa piroplasm membrane protein (Theileria parva (East coast fever infection agent)).